The primary structure comprises 227 residues: UPF0173 metal-dependent hydrolase Oter_4201 (227 aa).

Belongs to the UPF0173 family.

This Opitutus terrae (strain DSM 11246 / JCM 15787 / PB90-1) protein is UPF0173 metal-dependent hydrolase Oter_4201.